Here is a 41-residue protein sequence, read N- to C-terminus: LICYNTPFKDISKTCAEGENLCYYGKKDAVWNLYPIRGCAD.

2 disulfide bridges follow: Cys3/Cys22 and Cys15/Cys39.

Belongs to the three-finger toxin family. Short-chain subfamily. As to expression, expressed by the venom gland.

The protein resides in the secreted. The sequence is that of Maticotoxin A from Calliophis bivirgatus (Blue Malaysian coral snake).